A 1335-amino-acid chain; its full sequence is Xanthine dehydrogenase/oxidase (1335 aa).

Residues 7–94 (DELVFFVNGK…HVAVTTVEGI (88 aa)) enclose the 2Fe-2S ferredoxin-type domain. [2Fe-2S] cluster contacts are provided by C46, C51, C54, C76, C115, C118, C150, and C152. An FAD-binding PCMH-type domain is found at 231–416 (FEGERVTWIQ…VSIVIPYSRK (186 aa)). FAD is bound by residues 259–266 (LVVGNTEI), F339, 349–353 (SIGGN), D362, L406, and K424. A disulfide bridge connects residues C538 and C995. Residues Q770 and F801 each contribute to the Mo-molybdopterin site. The substrate site is built by E805 and R883. A Mo-molybdopterin-binding site is contributed by R915. Substrate contacts are provided by F917 and T1013. A1082 serves as a coordination point for Mo-molybdopterin. The active-site Proton acceptor is the E1264.

The protein belongs to the xanthine dehydrogenase family. As to quaternary structure, homodimer. Interacts with BTN1A1. FAD is required as a cofactor. It depends on Mo-molybdopterin as a cofactor. Requires [2Fe-2S] cluster as cofactor. Post-translationally, subject to partial proteolysis; this alters the enzyme from the dehydrogenase form (D) to the oxidase form (O). In terms of processing, contains sulfhydryl groups that are easily oxidized (in vitro); this alters the enzyme from the dehydrogenase form (D) to the oxidase form (O).

Its subcellular location is the cytoplasm. The protein resides in the peroxisome. It is found in the secreted. It carries out the reaction xanthine + NAD(+) + H2O = urate + NADH + H(+). The enzyme catalyses hypoxanthine + NAD(+) + H2O = xanthine + NADH + H(+). The catalysed reaction is xanthine + O2 + H2O = urate + H2O2. With respect to regulation, can be converted from the dehydrogenase form (D) to the oxidase form (O) irreversibly by proteolysis or reversibly through the oxidation of sulfhydryl groups. Key enzyme in purine degradation. Catalyzes the oxidation of hypoxanthine to xanthine. Catalyzes the oxidation of xanthine to uric acid. Contributes to the generation of reactive oxygen species. The protein is Xanthine dehydrogenase/oxidase (Xdh) of Mus musculus (Mouse).